Here is a 270-residue protein sequence, read N- to C-terminus: tRNA pseudouridine synthase A (270 aa).

The Nucleophile role is filled by Asp51. Tyr109 contacts substrate.

It belongs to the tRNA pseudouridine synthase TruA family. As to quaternary structure, homodimer.

It catalyses the reaction uridine(38/39/40) in tRNA = pseudouridine(38/39/40) in tRNA. Formation of pseudouridine at positions 38, 39 and 40 in the anticodon stem and loop of transfer RNAs. This chain is tRNA pseudouridine synthase A, found in Burkholderia ambifaria (strain ATCC BAA-244 / DSM 16087 / CCUG 44356 / LMG 19182 / AMMD) (Burkholderia cepacia (strain AMMD)).